The sequence spans 87 residues: Small ribosomal subunit protein uS17 (87 aa).

Belongs to the universal ribosomal protein uS17 family. In terms of assembly, part of the 30S ribosomal subunit.

Functionally, one of the primary rRNA binding proteins, it binds specifically to the 5'-end of 16S ribosomal RNA. The sequence is that of Small ribosomal subunit protein uS17 from Lacticaseibacillus casei (strain BL23) (Lactobacillus casei).